A 236-amino-acid chain; its full sequence is Small ribosomal subunit protein uS2c (236 aa).

This sequence belongs to the universal ribosomal protein uS2 family.

Its subcellular location is the plastid. It localises to the chloroplast. The chain is Small ribosomal subunit protein uS2c (rps2) from Phaseolus vulgaris (Kidney bean).